Reading from the N-terminus, the 626-residue chain is (R)-linalool synthase 2, chloroplastic (626 aa).

The N-terminal 21 residues, 1–21, are a transit peptide targeting the chloroplast; that stretch reads MAFVSIAPLASRCCVHKSFVS. Mg(2+)-binding residues include aspartate 377, aspartate 381, and glutamate 529. Residues 377–381 carry the DDXXD motif motif; that stretch reads DDIYD.

It belongs to the terpene synthase family. Tpsd subfamily. It depends on Mg(2+) as a cofactor. Mn(2+) is required as a cofactor.

The protein resides in the plastid. It is found in the chloroplast. It carries out the reaction (2E)-geranyl diphosphate + H2O = (R)-linalool + diphosphate. The protein operates within terpene metabolism; oleoresin biosynthesis. In terms of biological role, terpene synthase (mono-TPS) involved in the biosynthesis of monoterpene natural products included in conifer oleoresin secretions and volatile emissions; these compounds contribute to biotic and abiotic stress defense against herbivores and pathogens. Catalyzes the conversion of (2E)-geranyl diphosphate (GPP) to (R)-linalool. In Picea sitchensis (Sitka spruce), this protein is (R)-linalool synthase 2, chloroplastic.